The sequence spans 185 residues: Crossover junction endodeoxyribonuclease RuvC (185 aa).

Residues Asp-7, Glu-66, and Asp-137 contribute to the active site. Positions 7, 66, and 137 each coordinate Mg(2+).

It belongs to the RuvC family. As to quaternary structure, homodimer which binds Holliday junction (HJ) DNA. The HJ becomes 2-fold symmetrical on binding to RuvC with unstacked arms; it has a different conformation from HJ DNA in complex with RuvA. In the full resolvosome a probable DNA-RuvA(4)-RuvB(12)-RuvC(2) complex forms which resolves the HJ. It depends on Mg(2+) as a cofactor.

It is found in the cytoplasm. It carries out the reaction Endonucleolytic cleavage at a junction such as a reciprocal single-stranded crossover between two homologous DNA duplexes (Holliday junction).. The RuvA-RuvB-RuvC complex processes Holliday junction (HJ) DNA during genetic recombination and DNA repair. Endonuclease that resolves HJ intermediates. Cleaves cruciform DNA by making single-stranded nicks across the HJ at symmetrical positions within the homologous arms, yielding a 5'-phosphate and a 3'-hydroxyl group; requires a central core of homology in the junction. The consensus cleavage sequence is 5'-(A/T)TT(C/G)-3'. Cleavage occurs on the 3'-side of the TT dinucleotide at the point of strand exchange. HJ branch migration catalyzed by RuvA-RuvB allows RuvC to scan DNA until it finds its consensus sequence, where it cleaves and resolves the cruciform DNA. This Anaeromyxobacter dehalogenans (strain 2CP-1 / ATCC BAA-258) protein is Crossover junction endodeoxyribonuclease RuvC.